We begin with the raw amino-acid sequence, 130 residues long: Small ribosomal subunit protein uS9 (130 aa).

This sequence belongs to the universal ribosomal protein uS9 family.

This Citrobacter koseri (strain ATCC BAA-895 / CDC 4225-83 / SGSC4696) protein is Small ribosomal subunit protein uS9.